A 196-amino-acid chain; its full sequence is TGEKPFMCTKCGKCLSTKQKLNLHHMTHTGEKPFTCTECGKGFSRNDYLKIHQTIHTGEKPFTCIECGKGFSINRTLKLHYMTHTGEKPFTCTECSKGFSTKRDLEIHQTMHTGEKPLTCTECSKGFSTKHKLSIHQRVHTGEKPFTCTECNKGFSRNDHLQIHQTVHTGEKPFTCTECSKCFSRKELLKIHQIVH.

C2H2-type zinc fingers lie at residues 6-28 (FMCT…HMTH), 34-56 (FTCT…QTIH), 62-84 (FTCI…YMTH), 90-112 (FTCT…QTMH), 118-140 (LTCT…QRVH), 146-168 (FTCT…QTVH), and 174-196 (FTCT…QIVH).

It belongs to the krueppel C2H2-type zinc-finger protein family.

It is found in the nucleus. In terms of biological role, may be involved in transcriptional regulation. The protein is Gastrula zinc finger protein xLCGF3.1 of Xenopus laevis (African clawed frog).